Consider the following 139-residue polypeptide: Protein archease (139 aa).

Residues aspartate 12, aspartate 138, and isoleucine 139 each coordinate Ca(2+).

It belongs to the archease family.

In terms of biological role, activates the tRNA-splicing ligase complex by facilitating the enzymatic turnover of catalytic subunit RtcB. Acts by promoting the guanylylation of RtcB, a key intermediate step in tRNA ligation. Can also alter the NTP specificity of RtcB such that ATP, dGTP or ITP is used efficiently. In Sulfurisphaera tokodaii (strain DSM 16993 / JCM 10545 / NBRC 100140 / 7) (Sulfolobus tokodaii), this protein is Protein archease.